A 116-amino-acid polypeptide reads, in one-letter code: MSNVRANRVGEQMKKELSDIFMRELKDPRIEFVTVTGVDVTGDLQQANVYITVLGDDEQKEATLAGLSKAKGFIRSEIGKRIRLRKTPELFFHFDESIEYGNRIEKLLQDINRDGE.

This sequence belongs to the RbfA family. As to quaternary structure, monomer. Binds 30S ribosomal subunits, but not 50S ribosomal subunits or 70S ribosomes.

It localises to the cytoplasm. Functionally, one of several proteins that assist in the late maturation steps of the functional core of the 30S ribosomal subunit. Associates with free 30S ribosomal subunits (but not with 30S subunits that are part of 70S ribosomes or polysomes). Required for efficient processing of 16S rRNA. May interact with the 5'-terminal helix region of 16S rRNA. The chain is Ribosome-binding factor A from Halalkalibacterium halodurans (strain ATCC BAA-125 / DSM 18197 / FERM 7344 / JCM 9153 / C-125) (Bacillus halodurans).